The primary structure comprises 262 residues: Acyl-[acyl-carrier-protein]--UDP-N-acetylglucosamine O-acyltransferase (262 aa).

The protein belongs to the transferase hexapeptide repeat family. LpxA subfamily. As to quaternary structure, homotrimer.

It localises to the cytoplasm. It carries out the reaction a (3R)-hydroxyacyl-[ACP] + UDP-N-acetyl-alpha-D-glucosamine = a UDP-3-O-[(3R)-3-hydroxyacyl]-N-acetyl-alpha-D-glucosamine + holo-[ACP]. It participates in glycolipid biosynthesis; lipid IV(A) biosynthesis; lipid IV(A) from (3R)-3-hydroxytetradecanoyl-[acyl-carrier-protein] and UDP-N-acetyl-alpha-D-glucosamine: step 1/6. In terms of biological role, involved in the biosynthesis of lipid A, a phosphorylated glycolipid that anchors the lipopolysaccharide to the outer membrane of the cell. The polypeptide is Acyl-[acyl-carrier-protein]--UDP-N-acetylglucosamine O-acyltransferase (Verminephrobacter eiseniae (strain EF01-2)).